A 122-amino-acid chain; its full sequence is Elsinochromes biosynthesis cluster protein HP4 (122 aa).

Functionally, part of the gene cluster that mediates the biosynthesis of elsinochromes, pigments consisting of at least four interconvertible tautomers (A, B, C and D) that have a core phenolic quinone to which various side chains are attached and which play an important role in fungal pathogenesis. The non-reducing polyketide synthase PKS1 was proposed to iteratively catalyze decarboxylation between acetyl-CoA and malonyl-CoA subunits for polyketide chain elongation. The released polyketide undergoes cyclization to form an aromatic ring, and proceeds via serial modification steps to produce the heptaketide back- bone of elsinochrome. As elsinochrome has a symmetrical structure, two identical heptaketides are fused to form a core 1,2-dihydrobenzo-perylene ring structure, which can then be successively modified to produce the various derivatives of elsinochrome. Some of these reactions may be cooperatively carried out, at least in part, by the products of RDT1, OXR1 and PKS1. PRF1, embedded within the elsinochrome cluster possibly functions to stabilize some of the biosynthetic enzymes required for elsinochrome production. As prefoldin is a hexamer containing 2 a and 4 b subunits, additional prefoldin subunits, whose coding genes may not immediately link to the elsinochrome biosynthetic gene cluster, are required to fulfill the chaperone function. In addition, no methyltransferase-coding gene exists within the biosynthetic gene cluster, even though elsinochrome has four methyl groups at positions C3, C7, C8 and C12. Apparently, the identified gene cluster does not contain the entire entourage of genes responsible for elsinochrome biosynthesis. Once elsinochrome is synthesized, it must be exported outside the fungal cells, which is probably accomplished by the ECT1 transporter, to avoid toxicity. In Elsinoe fawcettii (Citrus scab fungus), this protein is Elsinochromes biosynthesis cluster protein HP4.